We begin with the raw amino-acid sequence, 490 residues long: Nicotinate phosphoribosyltransferase (490 aa).

Phosphohistidine is present on histidine 206.

Belongs to the NAPRTase family. In terms of processing, transiently phosphorylated on a His residue during the reaction cycle. Phosphorylation strongly increases the affinity for substrates and increases the rate of nicotinate D-ribonucleotide production. Dephosphorylation regenerates the low-affinity form of the enzyme, leading to product release.

The enzyme catalyses nicotinate + 5-phospho-alpha-D-ribose 1-diphosphate + ATP + H2O = nicotinate beta-D-ribonucleotide + ADP + phosphate + diphosphate. It participates in cofactor biosynthesis; NAD(+) biosynthesis; nicotinate D-ribonucleotide from nicotinate: step 1/1. In terms of biological role, catalyzes the synthesis of beta-nicotinate D-ribonucleotide from nicotinate and 5-phospho-D-ribose 1-phosphate at the expense of ATP. The sequence is that of Nicotinate phosphoribosyltransferase (pncB) from Bacillus subtilis (strain 168).